A 494-amino-acid chain; its full sequence is Ketol-acid reductoisomerase (NADP(+)) (494 aa).

The KARI N-terminal Rossmann domain maps to 14–208 (LEQLGKCRFM…GGHRAGVLQS (195 aa)). NADP(+)-binding positions include 45 to 48 (CGAQ), arginine 68, arginine 76, serine 78, and 108 to 110 (DKQ). Histidine 132 is a catalytic residue. Residue glycine 158 participates in NADP(+) binding. KARI C-terminal knotted domains lie at 209 to 344 (SFVA…NAPA) and 345 to 487 (FDGA…MKDM). Positions 217, 221, 389, and 393 each coordinate Mg(2+). Serine 414 is a binding site for substrate.

This sequence belongs to the ketol-acid reductoisomerase family. Mg(2+) serves as cofactor.

The enzyme catalyses (2R)-2,3-dihydroxy-3-methylbutanoate + NADP(+) = (2S)-2-acetolactate + NADPH + H(+). It catalyses the reaction (2R,3R)-2,3-dihydroxy-3-methylpentanoate + NADP(+) = (S)-2-ethyl-2-hydroxy-3-oxobutanoate + NADPH + H(+). The protein operates within amino-acid biosynthesis; L-isoleucine biosynthesis; L-isoleucine from 2-oxobutanoate: step 2/4. It participates in amino-acid biosynthesis; L-valine biosynthesis; L-valine from pyruvate: step 2/4. Functionally, involved in the biosynthesis of branched-chain amino acids (BCAA). Catalyzes an alkyl-migration followed by a ketol-acid reduction of (S)-2-acetolactate (S2AL) to yield (R)-2,3-dihydroxy-isovalerate. In the isomerase reaction, S2AL is rearranged via a Mg-dependent methyl migration to produce 3-hydroxy-3-methyl-2-ketobutyrate (HMKB). In the reductase reaction, this 2-ketoacid undergoes a metal-dependent reduction by NADPH to yield (R)-2,3-dihydroxy-isovalerate. The protein is Ketol-acid reductoisomerase (NADP(+)) of Tolumonas auensis (strain DSM 9187 / NBRC 110442 / TA 4).